The following is a 254-amino-acid chain: Phosphomannomutase (254 aa).

Residue Asp-16 is the Nucleophile of the active site. Mg(2+)-binding residues include Asp-16 and Asp-18. The active-site Proton donor/acceptor is Asp-18. Residues Arg-25, Arg-129, Arg-140, Arg-147, Ser-185, and Asp-187 each coordinate alpha-D-mannose 1-phosphate. Residues Asp-216, Tyr-228, Asp-230, and Thr-233 each contribute to the Mg(2+) site.

This sequence belongs to the eukaryotic PMM family. In terms of assembly, homodimer.

Its subcellular location is the cytoplasm. It catalyses the reaction alpha-D-mannose 1-phosphate = D-mannose 6-phosphate. It functions in the pathway nucleotide-sugar biosynthesis; GDP-alpha-D-mannose biosynthesis; alpha-D-mannose 1-phosphate from D-fructose 6-phosphate: step 2/2. In terms of biological role, involved in the synthesis of the GDP-mannose and dolichol-phosphate-mannose required for a number of critical mannosyl transfer reactions. Required for maintaining N-linked glycoprotein glycosylation at the neuromuscular junction (NMJ) synaptomatrix, and thus acts in multiple pathways that prevent NMJ structural overgrowth, restrict synaptic bouton differentiation, and limit NMJ neurotransmission strength, in order to maintain viability, coordinate movement, and in adults ensure correct wing positioning. Acts in the NMJ trans-synaptic Wg pathway via glycosylation of synaptic Mmp2 which enables dlp/wg signaling during development. This is Phosphomannomutase from Drosophila melanogaster (Fruit fly).